The sequence spans 318 residues: NADH-ubiquinone oxidoreductase chain 1 (318 aa).

8 helical membrane passes run 2–22 (FLIN…FLTL), 69–89 (FLFT…WAPL), 102–122 (LLFI…SGWA), 146–166 (MTTI…TAFA), 171–191 (HLWL…STLA), 222–242 (LFFM…VILF), 253–273 (EIST…FLWV), and 294–314 (LPLT…LACI).

This sequence belongs to the complex I subunit 1 family.

It localises to the mitochondrion inner membrane. It carries out the reaction a ubiquinone + NADH + 5 H(+)(in) = a ubiquinol + NAD(+) + 4 H(+)(out). Its function is as follows. Core subunit of the mitochondrial membrane respiratory chain NADH dehydrogenase (Complex I) that is believed to belong to the minimal assembly required for catalysis. Complex I functions in the transfer of electrons from NADH to the respiratory chain. The immediate electron acceptor for the enzyme is believed to be ubiquinone. The sequence is that of NADH-ubiquinone oxidoreductase chain 1 (MT-ND1) from Loxodonta africana (African elephant).